The chain runs to 223 residues: Sigma non-opioid intracellular receptor 1 (223 aa).

Over 1 to 9 the chain is Lumenal; it reads MCWAVGRRW. The segment at 2-8 is targeting to endoplasmic reticulum-associated lipid droplets; sequence CWAVGRR. A helical membrane pass occupies residues 10 to 30; sequence AWAALLLAVAAVLAQVVWLWL. The Cytoplasmic segment spans residues 31-223; the sequence is GTQSFVFQHE…LTTYLFGQDA (193 aa). The segment at 99–106 is important for ligand-binding; it reads SLSEYVLL. The C-terminal hydrophobic region stretch occupies residues 177-223; the sequence is VIPSTLGFALADTVFSTQDFLTLFYTLRAYARGLRLELTTYLFGQDA.

It belongs to the ERG2 family. In terms of assembly, homotrimer. Forms a ternary complex with ANK2 and ITPR3. The complex is disrupted by agonists. Interacts with KCNA4. Interacts with KCNA2; cocaine consumption leads to increased interaction. Interacts with RNF112 in an oxidative stress-regulated manner.

The protein resides in the nucleus inner membrane. Its subcellular location is the nucleus outer membrane. The protein localises to the nucleus envelope. It is found in the cytoplasmic vesicle. It localises to the endoplasmic reticulum membrane. The protein resides in the membrane. Its subcellular location is the lipid droplet. The protein localises to the cell junction. It is found in the cell membrane. It localises to the cell projection. The protein resides in the growth cone. Its subcellular location is the postsynaptic density membrane. Its function is as follows. Functions in lipid transport from the endoplasmic reticulum and is involved in a wide array of cellular functions probably through regulation of the biogenesis of lipid microdomains at the plasma membrane. Involved in the regulation of different receptors it plays a role in BDNF signaling and EGF signaling. Also regulates ion channels like the potassium channel and could modulate neurotransmitter release. Plays a role in calcium signaling through modulation together with ANK2 of the ITP3R-dependent calcium efflux at the endoplasmic reticulum. Plays a role in several other cell functions including proliferation, survival and death. Originally identified for its ability to bind various psychoactive drugs it is involved in learning processes, memory and mood alteration. Necessary for proper mitochondrial axonal transport in motor neurons, in particular the retrograde movement of mitochondria. Plays a role in protecting cells against oxidative stress-induced cell death via its interaction with RNF112. This is Sigma non-opioid intracellular receptor 1 (SIGMAR1) from Bos taurus (Bovine).